A 1333-amino-acid polypeptide reads, in one-letter code: Partitioning defective 3 homolog (1333 aa).

S25 carries the post-translational modification Phosphoserine. T91 is modified (phosphothreonine). The interval 143 to 262 (SSDPALTGLS…VGHADTGLEN (120 aa)) is disordered. 2 stretches are compositionally biased toward polar residues: residues 150–163 (GLSTSVSDNNFSSE) and 171–187 (TRWSTTAGFLKQNTAGS). Residues S156 and S174 each carry the phosphoserine modification. The segment covering 190 to 203 (TCDRKKDENYRSLP) has biased composition (basic and acidic residues). Residues 207–224 (SSWSNQFQRDNARSSLSA) are compositionally biased toward polar residues. Positions 271-359 (MVKLVQVPND…ARVIWFHVVP (89 aa)) constitute a PDZ 1 domain. Disordered regions lie at residues 369 to 388 (LSQREKNNYSPGRFSPDSHC) and 397 to 441 (NAPQ…APPS). The residue at position 383 (S383) is a Phosphoserine. PDZ domains follow at residues 461–546 (NIQL…LVFR) and 590–677 (EVPL…GMIQ). Phosphotyrosine is present on Y489. A phosphoserine mark is found at S692, S695, S715, S728, S806, and S824. Interaction with PRKCI and PRKCZ stretches follow at residues 712–932 (RRIS…YDKP) and 712–936 (RRIS…MVDD). K831 is subject to N6-acetyllysine. S834 is subject to Phosphoserine. K848 bears the N6-acetyllysine mark. Phosphoserine occurs at positions 849 and 869. Disordered stretches follow at residues 861–884 (TVDDQRAGSPSRDVGPSLGLKKSS), 928–1011 (SYDK…AKKG), 1024–1071 (KHRK…ERQA), 1110–1267 (PQSP…LGGH), and 1283–1333 (QEQR…PFYS). An N6-acetyllysine modification is found at K881. The interval 931–1333 (KPMVDDDDEG…TPEKGRPFYS (403 aa)) is interaction with FRMD4A. Residues 935–949 (DDDDEGMETLEEDTE) are compositionally biased toward acidic residues. S958 is subject to Phosphoserine; by AURKA. Phosphoserine occurs at positions 967 and 969. Basic and acidic residues-rich tracts occupy residues 977-1005 (DPEKRDKTERKKDKAGKDKKKDREKEKDK) and 1026-1039 (RKDDKMEKMGRIKI). S1042 bears the Phosphoserine mark. A compositionally biased stretch (basic and acidic residues) spans 1046–1071 (EEDRVRMKEEQERIQAKTREFRERQA). The stretch at 1046 to 1078 (EEDRVRMKEEQERIQAKTREFRERQARERDYAE) forms a coiled coil. A compositionally biased stretch (polar residues) spans 1134–1143 (PGDSNRSTPS). Over residues 1144–1171 (NHDRIQRLRQEFQQAKQDEDVEDRRRTY) the composition is skewed to basic and acidic residues. Coiled coils occupy residues 1145–1168 (HDRIQRLRQEFQQAKQDEDVEDRR), 1195–1218 (VQVQRQRQEERESFQQAQRQYSSL), and 1274–1295 (MLETQELLRQEQRRKEQQLKKQ). Residues 1176 to 1199 (SWSSSRPASQSGRHSVSVEVQVQR) are compositionally biased toward low complexity. The span at 1215–1236 (YSSLPRQSRKNASSISQDSWEQ) shows a compositional bias: polar residues. Residues 1283–1292 (QEQRRKEQQL) are compositionally biased toward basic and acidic residues. Over residues 1314–1323 (SQVARLNRLQ) the composition is skewed to polar residues. Residues 1324–1333 (TPEKGRPFYS) are compositionally biased toward basic and acidic residues. K1327 is subject to N6-acetyllysine.

It belongs to the PAR3 family. Interacts with PRCKI and CDH5. Interacts (via PDZ 3 domain) with PTEN (via C-terminus). Component of a complex whose core is composed of ARHGAP17, AMOT, PALS1, PATJ and PARD3/PAR3. Interacts with LIMK2, AURKA and AURKB. Component of the Par polarity complex, composed of at least phosphorylated PRKCZ, PARD3 and TIAM1. Interacts with ECT2 and FBF1. Interacts (via PDZ 1 domain) with F11R/JAM1, PARD6A and PARD6B. Part of a complex with PARD6A or PARD6B, PRKCI or PRKCZ and CDC42 or RAC1. Directly interacts with TIAM1 and TIAM2. Interacts with SIRT2. Interacts (via coiled-coil domain) with FRMD4A. Found in a complex with PARD3, CYTH1 and FRMD4A. Interacts with SAPCD2. Interacts with PRKCA. In terms of assembly, interacts with PRKCZ. In terms of processing, acetylated. Deacetylated by SIRT2, thereby inhibiting Schwann cell peripheral myelination. Phosphorylation at Ser-824 by PRKCZ and PRKCI occurs at the most apical tip of epithelial cell-cell contacts during the initial phase of tight junction formation and may promote dissociation of the complex with PARD6. EGF-induced Tyr-1123 phosphorylation mediates dissociation from LIMK2. Phosphorylation by AURKA at Ser-958 is required for the normal establishment of neuronal polarity. Isoform 4 and isoform 5 are phosphorylated during oocyte maturation. In terms of tissue distribution, all isoforms are expressed in heart, while expression in brain is mainly limited to isoform 1, and to isoform 3 to a weaker level.

It localises to the cytoplasm. Its subcellular location is the endomembrane system. It is found in the cell junction. The protein resides in the tight junction. The protein localises to the adherens junction. It localises to the cell cortex. Its subcellular location is the cytoskeleton. It is found in the cell membrane. Its function is as follows. Adapter protein involved in asymmetrical cell division and cell polarization processes. Seems to play a central role in the formation of epithelial tight junctions. Targets the phosphatase PTEN to cell junctions. Association with PARD6B may prevent the interaction of PARD3 with F11R/JAM1, thereby preventing tight junction assembly. The PARD6-PARD3 complex links GTP-bound Rho small GTPases to atypical protein kinase C proteins. Required for establishment of neuronal polarity and normal axon formation in cultured hippocampal neurons. Involved in Schwann cell peripheral myelination. The polypeptide is Partitioning defective 3 homolog (Pard3) (Mus musculus (Mouse)).